The following is a 622-amino-acid chain: Sodium-dependent serotonin transporter (622 aa).

A disordered region spans residues 1 to 53 (MDRSGSSDFAGAAATTGRSNPAPWSDDKESPNNEDDSNEDDGDHTTPAKVTDP). Over 1 to 82 (MDRSGSSDFA…TRETWGQKAE (82 aa)) the chain is Cytoplasmic. Acidic residues predominate over residues 32–42 (NNEDDSNEDDG). Helical transmembrane passes span 83-103 (FLLAVIGFAVDLGNVWRFPYI), 111-130 (AFLVPYCLFLIFGGLPLFYM), and 155-175 (GVGYAICLIDIYMGMYYNTII). G89, A91, V92, and N96 together coordinate Na(+). Residues 176 to 244 (GWAVYYLFAS…NGLDFMGPVK (69 aa)) are Extracellular-facing. Cysteines 195 and 204 form a disulfide. N211 carries N-linked (GlcNAc...) asparagine glycosylation. A run of 5 helical transmembrane segments spans residues 245–263 (PTLALCVFGVFVLVYFSLW), 272–289 (VVWVTALAPYVVLIILLV), 325–342 (IFFSLGPGFGTLLALSSY), 354–375 (LITSSINCLTSFLAGFVIFSVL), and 408–427 (MSGSVFWSIIFFLMLITLGL). Na(+) contacts are provided by S328, N360, L425, D428, and S429. Helical transmembrane passes span 455 to 473 (LFVLLLLAFIFLCALPTMT), 489 to 509 (GLAILFVVFVEAAGVFWFYGV), 530 to 549 (ICWTYISPVFLLTIFIFSIM), and 568 to 586 (VGWAVTCSSVLCIPMYIIY). Residues 587–622 (KFFFASKGGCRQRLQESFQPEDNCGSVVPGQQGTSV) are Cytoplasmic-facing.

The protein belongs to the sodium:neurotransmitter symporter (SNF) (TC 2.A.22) family. As to expression, expression is specific to cell bodies in the ventral ganglion of the embryonic and larval nervous system.

It localises to the cell membrane. Functionally, terminates the action of serotonin by its high affinity sodium-dependent reuptake into presynaptic terminals. This Drosophila melanogaster (Fruit fly) protein is Sodium-dependent serotonin transporter (SerT).